The primary structure comprises 248 residues: Conoporin-Cn1 (248 aa).

Positions 1 to 23 (MGVQFPALKTMVTVFLLLMGNMS) are cleaved as a signal peptide. Residues 45 to 64 (TPGSSLYGVALKDLADTSYN) form an N-terminal region region. 5 residues coordinate phosphocholine: G120, S138, P140, Y167, and Y171.

It belongs to the actinoporin family. Conoidea subfamily. As to quaternary structure, octamer or nonamer in membranes. Monomer in the soluble state. Post-translationally, 9 isoforms are detected in the injectable venom, mainly corresponding to different oxidative states. In terms of tissue distribution, expressed by the venom duct.

It is found in the secreted. The protein localises to the nematocyst. The protein resides in the target cell membrane. Pore-forming protein that forms pores of around 1 nm and causes cardiac stimulation and cytolysis. This Conus consors (Singed cone) protein is Conoporin-Cn1.